Consider the following 78-residue polypeptide: MPTKAGTKSTANKKTTKGSSKSGSARGHTGKTHAPPSMHSGMLYKDMVNIARSKGIPIYQNGTRLTKSELEKKIKRSK.

Residues 1–25 (MPTKAGTKSTANKKTTKGSSKSGSA) are compositionally biased toward low complexity. The interval 1-41 (MPTKAGTKSTANKKTTKGSSKSGSARGHTGKTHAPPSMHSG) is disordered.

It belongs to the asfivirus P10 family.

The protein localises to the virion. Functionally, may play a role in genome packaging through direct interaction with viral DNA. Binds to ssDNA and dsDNA with the same apparent affinity in vitro. The sequence is that of Structural DNA-binding protein p10 from African swine fever virus (isolate Warthog/Namibia/Wart80/1980) (ASFV).